Reading from the N-terminus, the 522-residue chain is MAFLDNPTIILAHIRQSHVTSDDTGMCEMVLIDHDVDLEKTHPPSVPGDSGSEVQGSSGETQGYIYAQSVDITSSWDFGIRRRSNTAQRLERLRKERQNQIKCKNIQWKERNSKQSAQELKSLFEKKSLKEKPPSSGKQSILSVRLEQCPLQLNNPFNEYSKFDGKGHVGTTATKKIDVYLPLHSSQDRLLPMTVVTMASARVQDLIGLICWQYTSEGREPKLNDNVSAYCLHIAEDDGEVDTDFPPLDSNEPIHKFGFSTLALVEKYSSPGLTSKESLFVRINAAHGFSLIQVDNTKVTMKEILLKAVKRRKGSQKISGPQYRLEKQSEPNIAVDLESTLESQNAWEFCLVRENSSRADGVFEEDSQIDIATVQDMLSSHHYKSFKVSMIHRLRFTTDVQLGISGDKVEIDPVTNQKASTKFWIKQKPISIDCDLLCACDLAEEKSPSHAVFKLTYLSSHDYKHLYFESDAATVSEIVLKVNYILESRASTARADYLAQKQRKLNRRTSFSFQKEKKSGQQ.

Alanine 2 is modified (N-acetylalanine). Residues alanine 2–histidine 184 form an interaction with MAP3K2 region. The interaction with NBN stretch occupies residues alanine 2–lysine 267. The tract at residues leucine 38–glycine 59 is disordered. Position 86 is a phosphothreonine; by PKB/AKT1 and RPS6KB1 (threonine 86). Serine 128 bears the Phosphoserine; by PKC mark. One can recognise a CRIM domain in the interval glutamine 139–lysine 267. 3 positions are modified to phosphoserine: serine 186, serine 315, and serine 356. The segment at leucine 279 to arginine 353 is SIN1-type RBD. Residues histidine 382–glutamate 487 enclose the SIN1-type PH domain. Arginine 393 is a binding site for a 1,2-diacyl-sn-glycero-3-phospho-(1D-myo-inositol-3,4,5-trisphosphate). Threonine 398 is subject to Phosphothreonine; by RPS6KB1. Positions 428 and 464 each coordinate a 1,2-diacyl-sn-glycero-3-phospho-(1D-myo-inositol-3,4,5-trisphosphate). The interaction with ATF2 stretch occupies residues phenylalanine 468–glutamine 522. At serine 510 the chain carries Phosphoserine.

It belongs to the SIN1 family. In terms of assembly, component of the mechanistic target of rapamycin complex 2 (mTORC2), consisting in two heterotretramers composed of MTOR, MLST8, RICTOR and MAPKAP1/SIN1. The mTORC2 core complex associates with PRR5/PROTOR1 and/or PRR5L/PROTOR2. Contrary to mTORC1, mTORC2 does not bind to and is not sensitive to FKBP12-rapamycin. Interacts with MAP3K2. Interacts with ATF2. Interacts with MAPK8. Interacts with GTP-bound HRAS and KRAS; inhibiting their activity. Interacts with IFNAR2. Post-translationally, phosphorylation at Ser-128 by PKC promotes relocalization to the perinuclear region, where the mTORC2 complex specifically mediates phosphorylation of SGK1. Phosphorylated at Thr-86 by AKT1 or RPS6KB1 in the presence of growth factors; the effect of this phosphorylation is however unclear. According to two studies, phosphorylation at Thr-86 by AKT1 is part of a positive feedback loop that increases mTORC2 activation. According to another study, phosphorylation at Thr-86 and Thr-398 by RPS6KB1 promotes dissociation from the mTORC2 complex, leading to inhibit mTORC2 signaling. In terms of tissue distribution, uniquitously expressed, with highest levels in testis, kidney and liver. Present in renal tubule cells (at protein level).

The protein resides in the cell membrane. Its subcellular location is the endoplasmic reticulum membrane. The protein localises to the early endosome membrane. It localises to the late endosome membrane. It is found in the lysosome membrane. The protein resides in the golgi apparatus membrane. Its subcellular location is the mitochondrion outer membrane. The protein localises to the cytoplasm. It localises to the perinuclear region. It is found in the nucleus. Phosphatidylinositol 3,4,5-trisphosphate (PI(3,4,5)P3) promotes MTOR activation by relieving MAPKAP1/SIN1-mediated inhibition of MTOR that takes place in absence of PI(3,4,5)P3. Component of the mechanistic target of rapamycin complex 2 (mTORC2), which transduces signals from growth factors to pathways involved in proliferation, cytoskeletal organization, lipogenesis and anabolic output. In response to growth factors, mTORC2 phosphorylates and activates AGC protein kinase family members, including AKT (AKT1, AKT2 and AKT3), PKC (PRKCA, PRKCB and PRKCE) and SGK1. In contrast to mTORC1, mTORC2 is nutrient-insensitive. Within the mTORC2 complex, MAPKAP1/SIN1 acts as a substrate adapter which recognizes and binds AGC protein kinase family members for phosphorylation by MTOR. mTORC2 plays a critical role in AKT1 activation by mediating phosphorylation of different sites depending on the context, such as 'Thr-450', 'Ser-473', 'Ser-477' or 'Thr-479', facilitating the phosphorylation of the activation loop of AKT1 on 'Thr-308' by PDPK1/PDK1 which is a prerequisite for full activation. mTORC2 catalyzes the phosphorylation of SGK1 at 'Ser-422' and of PRKCA on 'Ser-657'. The mTORC2 complex also phosphorylates various proteins involved in insulin signaling, such as FBXW8 and IGF2BP1. mTORC2 acts upstream of Rho GTPases to regulate the actin cytoskeleton, probably by activating one or more Rho-type guanine nucleotide exchange factors. mTORC2 promotes the serum-induced formation of stress-fibers or F-actin. MAPKAP1 inhibits MAP3K2 by preventing its dimerization and autophosphorylation. Inhibits HRAS and KRAS independently of mTORC2 complex. Enhances osmotic stress-induced phosphorylation of ATF2 and ATF2-mediated transcription. Involved in ciliogenesis, regulates cilia length through its interaction with CCDC28B independently of mTORC2 complex. The chain is Target of rapamycin complex 2 subunit MAPKAP1 from Mus musculus (Mouse).